The sequence spans 160 residues: Small ribosomal subunit protein uS19v (160 aa).

This sequence belongs to the universal ribosomal protein uS19 family.

The protein resides in the cytoplasm. The sequence is that of Small ribosomal subunit protein uS19v (RPS15F) from Arabidopsis thaliana (Mouse-ear cress).